The sequence spans 331 residues: PDZ and LIM domain protein 4 (331 aa).

In terms of domain architecture, PDZ spans 1–84 (MPHSVTLRGP…HLTLSVSRPE (84 aa)). Disordered stretches follow at residues 80–99 (VSRPEGRSWPSTPEDNKAQA), 105–152 (DSEA…GSNS), and 221–243 (AGEGGERPGPGGPRNLKPTASKL). Residues S112, S116, S120, and S135 each carry the phosphoserine modification. The 60-residue stretch at 254-313 (PECTRCGHGIVGTIVKARDKLYHPECFMCSDCGLNLKQRGYFFLDERLYCESHAKARVKP) folds into the LIM zinc-binding domain.

As to quaternary structure, homodimer. Interacts (via C-terminus only or via combined C-terminus and LIM domain, but not LIM domain only) with PTPN13 (via the second or fourth PDZ domains). Found in a complex with PTPN13 and TRIP6. Interacts (via PDZ domain) with ACTN1 and ACTN2 (via C-terminal SDL residues). Interacts (via PDZ domain) with TRIP6 (via the second LIM domain or via the third LIM domain plus C-terminus). Interacts (via LIM domain) with GRIA1 (via C-terminus); this interaction as well as the interaction with alpha-actinin is required for their colocalization in early endosomes. Interacts with PDLIM1. Forms (via LIM domain) a heterodimer with PDLIM3. Interacts directly with SRC (via kinase domain and to a lesser extent the SH2 domain). Phosphorylated on tyrosine residue(s). Can be dephosphorylated by PTPN13.

Its subcellular location is the cytoplasm. It localises to the cytoskeleton. It is found in the cell projection. The protein localises to the dendritic spine. The protein resides in the early endosome membrane. Its subcellular location is the recycling endosome membrane. It localises to the nucleus. It is found in the perinuclear region. The protein localises to the lamellipodium. The protein resides in the synapse. Its subcellular location is the synaptosome. In terms of biological role, suppresses SRC activation by recognizing and binding to active SRC and facilitating PTPN13-mediated dephosphorylation of SRC 'Tyr-419' leading to its inactivation. Inactivated SRC dissociates from this protein allowing the initiation of a new SRC inactivation cycle. Involved in reorganization of the actin cytoskeleton. In nonmuscle cells, binds to ACTN1 (alpha-actinin-1), increases the affinity of ACTN1 to F-actin (filamentous actin), and promotes formation of actin stress fibers. Involved in regulation of the synaptic AMPA receptor transport in dendritic spines of hippocampal pyramidal neurons directing the receptors toward an insertion at the postsynaptic membrane. Links endosomal surface-internalized GRIA1-containing AMPA receptors to the alpha-actinin/actin cytoskeleton. Increases AMPA receptor-mediated excitatory postsynaptic currents in neurons. This chain is PDZ and LIM domain protein 4 (PDLIM4), found in Bos taurus (Bovine).